We begin with the raw amino-acid sequence, 706 residues long: Alpha-hemolysin translocation ATP-binding protein HlyB (706 aa).

A Peptidase C39 domain is found at 1 to 125 (MMSKCSSHNS…KLYQGKVILV (125 aa)). The active site involves H83. The next 5 membrane-spanning stretches (helical) occupy residues 153 to 173 (ILLE…ITPL), 191 to 211 (LNII…LTGA), 269 to 289 (ALTS…MWYY), 295 to 315 (LVIL…SPLL), and 388 to 408 (VMVI…ISIG). Residues 154–436 (LLEVLTVSAF…LAHLWQDFQQ (283 aa)) form the ABC transmembrane type-1 domain. One can recognise an ABC transporter domain in the interval 468 to 703 (IEFKNVRFRY…KDSLYAYLYQ (236 aa)). 502-509 (GRSGSGKS) provides a ligand contact to ATP.

It belongs to the ABC transporter superfamily. Protein-1 exporter (TC 3.A.1.109) family. As to quaternary structure, homodimer.

Its subcellular location is the cell inner membrane. Its function is as follows. Part of the ABC transporter complex HlyBD involved in hemolysin export. Transmembrane domains (TMD) form a pore in the inner membrane and the ATP-binding domain (NBD) is responsible for energy generation. This Escherichia coli O157:H7 protein is Alpha-hemolysin translocation ATP-binding protein HlyB (hlyB).